The primary structure comprises 1009 residues: Epstein-Barr nuclear antigen 6 (1009 aa).

Disordered stretches follow at residues 1-70 (MESF…RGWM), 356-504 (TVGE…GACV), 516-646 (VETT…PRPS), 663-922 (QPIQ…DSMA), 948-971 (PLDINATTPKRPRVEESSHGPARC), and 984-1009 (DNSEISVFPKDAKQTDYDASTESELD). The span at 12-31 (QSPDNERGDNVQTTGEHDQD) shows a compositional bias: basic and acidic residues. Acidic residues predominate over residues 381–391 (VELESSDDELP). Over residues 445–461 (AQSTPERPGPSEQSSVT) the composition is skewed to polar residues. 2 stretches are compositionally biased toward pro residues: residues 479–495 (QPPPVPKPVPVKPTPPP) and 563–574 (AAGPPAAGPPAA). Polar residues-rich tracts occupy residues 622–641 (EITQMQQEPSSHLQSATQPT) and 664–679 (PIQSSHLSSMSPTQPI). Residues 680–689 (SHEEQPRYED) show a composition bias toward basic and acidic residues. Composition is skewed to low complexity over residues 710–769 (APYQ…GYQE) and 776–798 (PYQGYQEQPAPQAPYQGYQEPPA). A compositionally biased stretch (polar residues) spans 862-874 (DQVSQFPHLQSET). Residues 876–898 (PPRLQLSSVPLVSSSAPSWSSPQ) are compositionally biased toward low complexity. Residues 899–916 (PRAPIRPIPTRFPPPPMP) are compositionally biased toward pro residues.

Belongs to the herpesviridae EBNA-6 family. As to quaternary structure, interacts with host CTPB1; this interaction leads to gene repression, but also seems to interfere with the repressive function of CtBP pre-bound to DNA, leading to EBNA6 mediated up-regulation of many host genes. Interacts with host MYC; this interaction enhances MYC stability. Interacts (via N-terminus) with host RBPJ. Interacts (via N-terminus) with host histone H2AX; this interaction facilitates H2AX proteasomal degradation. Interacts with host TP73; this interaction inhibits TP73-mediated apoptotic pathway. Interacts (via N-terminus) with host PIM1; this interaction upregulates and stabilizes PIM1 and induces cell proliferation by inhibiting the growth suppressive properties of p21.

It localises to the host nucleus. The protein localises to the host nucleus matrix. In terms of biological role, plays an essential role for the activation and immortalization of human B-cells. Represses transcription of viral promoters TP1 and Cp through interaction with host RBPJ, and inhibits EBNA2-mediated activation of these promoters. Targets host chromatin through interactions with host transcription factors, especially RBPJ and IRF4. Alternatively, EBNA6 also regulates the transcription of the EBV oncogene LMP1 in a cell cycle-dependent manner. Modulates the activity of several host proteins involved in cell cycle regulation including host cyclin A, MYC, RB, p21 and p27 mainly through binding to the host SCF(SKP2) complex. Inhibits the promoter of host H2AX and targets H2AX to proteasomal degradation in order to promote latency and cell proliferation. Upregulates host PIM1 expression and stabilization. Potentiates PIM1 to promote cell proliferation by inhibiting the growth suppressive properties of p21. This chain is Epstein-Barr nuclear antigen 6 (EBNA6), found in Epstein-Barr virus (strain GD1) (HHV-4).